Consider the following 118-residue polypeptide: Elongin-B (118 aa).

Met-1 is subject to N-acetylmethionine. The region spanning 1-79 is the Ubiquitin-like domain; that stretch reads MDVFLMIRRH…QAPATVGLAF (79 aa). Thr-84 bears the Phosphothreonine mark. A disordered region spans residues 91-118; it reads EPFSSPPELPDVMKPQDSGGSANEQAVQ. A phosphoserine mark is found at Ser-108 and Ser-111. The segment covering 108–118 has biased composition (polar residues); it reads SGGSANEQAVQ.

Belongs to the Elongin B family. Heterotrimer of an A (ELOA, ELOA2 or ELOA3P), ELOB and ELOC subunit. The elongin BC complex interacts with EPOP; leading to recruit the elongin BC complex to Polycomb group (PcG) target genes, thereby restricting excessive activity of the PRC2/EED-EZH2 complex. Component of multiple cullin-RING E3 ubiquitin-protein ligase complexes composed of Elongin BC (ELOB and ELOC), a cullin (either CUL2 or CUL5), a catalytic subunit (either RBX1 or RNF7/RBX2), as well as a substrate adapter protein that can be either ASB2, ASB9, ASB11, KLHDC2, KLHDC3, KLHDC10, APPBP2, FEM1A, FEM1B, FEM1C, LRR1, PCMTD1, SOCS1, SOCS2, SOCS5, SPSB1, SPSB3, ELOA, VHL, WSB1 or RAB40C. As part of the Elongin BC E3 ubiquitin ligase complex; interacts with NRBP1. May also interact with DCUN1D1, DCUN1D2, DCUN1D3 and DCUN1D5. May form oligomers as a KLHDC2/KLHDC3-ELOB-ELOC complex; this interaction is autoinhibitory for the E3 ligase complex as the substrate-binding site of KLHDC2/KLHDC3 is blocked in the oligomer.

The protein localises to the nucleus. It participates in protein modification; protein ubiquitination. Its function is as follows. SIII, also known as elongin, is a general transcription elongation factor that increases the RNA polymerase II transcription elongation past template-encoded arresting sites. Subunit A is transcriptionally active and its transcription activity is strongly enhanced by binding to the dimeric complex of the SIII regulatory subunits B and C (elongin BC complex). In embryonic stem cells, the elongin BC complex is recruited by EPOP to Polycomb group (PcG) target genes in order generate genomic region that display both active and repressive chromatin properties, an important feature of pluripotent stem cells. In terms of biological role, core component of multiple cullin-2 and cullin-5-RING E3 ubiquitin-protein ligase complexes (ECS complexes), which mediate the ubiquitination of target proteins. By binding to BC-box motifs it seems to link target recruitment subunits, like VHL and members of the SOCS box family, to Cullin/RBX1 modules that activate E2 ubiquitination enzymes. Component the von Hippel-Lindau ubiquitination complex CBC(VHL). A number of ECS complexes (containing either KLHDC2, KLHDC3, KLHDC10, APPBP2, FEM1A, FEM1B or FEM1C as substrate-recognition component) are part of the DesCEND (destruction via C-end degrons) pathway, which recognizes a C-degron located at the extreme C terminus of target proteins, leading to their ubiquitination and degradation. The ECS(ASB9) complex mediates ubiquitination and degradation of CKB. As part of a multisubunit ubiquitin ligase complex, polyubiquitinates monoubiquitinated POLR2A. ECS(LRR1) ubiquitinates MCM7 and promotes CMG replisome disassembly by VCP and chromatin extraction during S-phase. As part of the ECS(RAB40C) complex, mediates ANKRD28 ubiquitination and degradation, thereby inhibiting protein phosphatase 6 (PP6) complex activity and focal adhesion assembly during cell migration. This chain is Elongin-B, found in Mus musculus (Mouse).